We begin with the raw amino-acid sequence, 135 residues long: Large ribosomal subunit protein eL32 (135 aa).

The disordered stretch occupies residues 51–77 (GRDNKFRLKMKGKPRPPEPGYRSPRKV).

This sequence belongs to the eukaryotic ribosomal protein eL32 family.

In Nanoarchaeum equitans (strain Kin4-M), this protein is Large ribosomal subunit protein eL32 (rpl32e).